A 184-amino-acid chain; its full sequence is Large ribosomal subunit protein uL5 (184 aa).

This sequence belongs to the universal ribosomal protein uL5 family. Part of the 50S ribosomal subunit; part of the 5S rRNA/L5/L18/L25 subcomplex. Contacts the 5S rRNA and the P site tRNA. Forms a bridge to the 30S subunit in the 70S ribosome.

This is one of the proteins that bind and probably mediate the attachment of the 5S RNA into the large ribosomal subunit, where it forms part of the central protuberance. In the 70S ribosome it contacts protein S13 of the 30S subunit (bridge B1b), connecting the 2 subunits; this bridge is implicated in subunit movement. Contacts the P site tRNA; the 5S rRNA and some of its associated proteins might help stabilize positioning of ribosome-bound tRNAs. This chain is Large ribosomal subunit protein uL5, found in Fervidobacterium nodosum (strain ATCC 35602 / DSM 5306 / Rt17-B1).